Here is an 82-residue protein sequence, read N- to C-terminus: ATP synthase subunit c, chloroplastic (82 aa).

2 helical membrane-spanning segments follow: residues 3–23 and 57–77; these read PIVAAASVVSAGLAVGLAAIG and FAFMESLTIYGLVVALALLFA.

Belongs to the ATPase C chain family. F-type ATPases have 2 components, F(1) - the catalytic core - and F(0) - the membrane proton channel. F(1) has five subunits: alpha(3), beta(3), gamma(1), delta(1), epsilon(1). F(0) has four main subunits: a(1), b(1), b'(1) and c(10-14). The alpha and beta chains form an alternating ring which encloses part of the gamma chain. F(1) is attached to F(0) by a central stalk formed by the gamma and epsilon chains, while a peripheral stalk is formed by the delta, b and b' chains.

Its subcellular location is the plastid. The protein localises to the chloroplast thylakoid membrane. Functionally, f(1)F(0) ATP synthase produces ATP from ADP in the presence of a proton or sodium gradient. F-type ATPases consist of two structural domains, F(1) containing the extramembraneous catalytic core and F(0) containing the membrane proton channel, linked together by a central stalk and a peripheral stalk. During catalysis, ATP synthesis in the catalytic domain of F(1) is coupled via a rotary mechanism of the central stalk subunits to proton translocation. In terms of biological role, key component of the F(0) channel; it plays a direct role in translocation across the membrane. A homomeric c-ring of between 10-14 subunits forms the central stalk rotor element with the F(1) delta and epsilon subunits. The sequence is that of ATP synthase subunit c, chloroplastic from Tetradesmus obliquus (Green alga).